The following is a 217-amino-acid chain: Probable GTP-binding protein EngB (217 aa).

Residues 29–213 enclose the EngB-type G domain; sequence GPLEVAFAGR…RQAIAETVGI (185 aa). GTP is bound by residues 37–44, 64–68, 91–94, 158–161, and 192–194; these read GRSNVGKS, GRTQE, DMPG, TKTD, and TSS. Residues Ser44 and Thr66 each contribute to the Mg(2+) site.

Belongs to the TRAFAC class TrmE-Era-EngA-EngB-Septin-like GTPase superfamily. EngB GTPase family. It depends on Mg(2+) as a cofactor.

Functionally, necessary for normal cell division and for the maintenance of normal septation. The chain is Probable GTP-binding protein EngB from Rhizobium johnstonii (strain DSM 114642 / LMG 32736 / 3841) (Rhizobium leguminosarum bv. viciae).